The following is a 270-amino-acid chain: MISKINFVKMHGLGNDFVIVNKRDLSSSYDLSQLAKNMAERHTGIGCDQFIIYEEHNDFYEMIIYNIDGSSAKLCGNATRCLAKLIYLDTGKQDITVMVGNKKLLCNVNDENNISVNVGSVSFNEAWMPNRDKVWEFAERYMIDLKETICVDIGNPHVVIFSKLEPQDQKIVGERLQAKELFADGVNVNFAEVKDNKIYLSVWERGAGLTLACGSGACGSFAAGLKRGFIHSPSTIVFKHGNLTMKEENGNIIMQGAATLVARGEYYCEQ.

Substrate-binding residues include Asn-15, Gln-49, and Asn-66. Cys-75 acts as the Proton donor in catalysis. Substrate-binding positions include 76–77 (GN), Asn-155, Asn-187, and 204–205 (ER). Residue Cys-213 is the Proton acceptor of the active site. Residue 214–215 (GS) participates in substrate binding.

This sequence belongs to the diaminopimelate epimerase family. Homodimer.

The protein resides in the cytoplasm. The enzyme catalyses (2S,6S)-2,6-diaminopimelate = meso-2,6-diaminopimelate. Its pathway is amino-acid biosynthesis; L-lysine biosynthesis via DAP pathway; DL-2,6-diaminopimelate from LL-2,6-diaminopimelate: step 1/1. Catalyzes the stereoinversion of LL-2,6-diaminopimelate (L,L-DAP) to meso-diaminopimelate (meso-DAP), a precursor of L-lysine and an essential component of the bacterial peptidoglycan. In Rickettsia africae (strain ESF-5), this protein is Diaminopimelate epimerase.